The chain runs to 415 residues: Chorismate synthase (415 aa).

Positions Glu43–Gln72 are disordered. NADP(+) is bound at residue Arg48. Residues Arg125–Ser127, Gly304, His319–Ser323, and Arg346 each bind FMN. Residues Thr262–Asp310 are disordered. The span at Asp298–Thr307 shows a compositional bias: gly residues. Over residues Pro379–Tyr393 the composition is skewed to basic and acidic residues. The disordered stretch occupies residues Pro379 to Asp415.

The protein belongs to the chorismate synthase family. The cofactor is FMNH2.

It catalyses the reaction 5-O-(1-carboxyvinyl)-3-phosphoshikimate = chorismate + phosphate. It participates in metabolic intermediate biosynthesis; chorismate biosynthesis; chorismate from D-erythrose 4-phosphate and phosphoenolpyruvate: step 7/7. Functionally, catalyzes the anti-1,4-elimination of the C-3 phosphate and the C-6 proR hydrogen from 5-enolpyruvylshikimate-3-phosphate (EPSP) to yield chorismate, which is the branch point compound that serves as the starting substrate for the three terminal pathways of aromatic amino acid biosynthesis. This reaction introduces a second double bond into the aromatic ring system. This Halomicrobium mukohataei (strain ATCC 700874 / DSM 12286 / JCM 9738 / NCIMB 13541) (Haloarcula mukohataei) protein is Chorismate synthase.